A 1478-amino-acid chain; its full sequence is Adhesion G protein-coupled receptor L2 (1478 aa).

A signal peptide spans 1–25; it reads MVSSGCRMRSLWFIIIISFLPNTEG. The Extracellular segment spans residues 26 to 855; the sequence is FSRAALPFGL…VHELLLTVIT (830 aa). One can recognise an SUEL-type lectin domain in the interval 41-130; that stretch reads SCEGYSIDLR…KYLEVQYECV (90 aa). Asparagine 99 is a glycosylation site (N-linked (GlcNAc...) asparagine). The 260-residue stretch at 139 to 398 folds into the Olfactomedin-like domain; it reads VCPGTLKAIV…ILRYSLEFGP (260 aa). Cysteine 140 and cysteine 322 are joined by a disulfide. N-linked (GlcNAc...) asparagine glycosylation is present at asparagine 335. Positions 422–458 are disordered; it reads VSTTSTTSQKGPMSTTVAGSQEGSKGTKAPPAVSTTK. Over residues 430–445 the composition is skewed to polar residues; it reads QKGPMSTTVAGSQEGS. Residues asparagine 524, asparagine 633, asparagine 735, asparagine 748, asparagine 791, asparagine 796, and asparagine 817 are each glycosylated (N-linked (GlcNAc...) asparagine). The GAIN-B domain maps to 663 to 841; the sequence is TRVSMPTENI…AILMAHREIA (179 aa). 2 disulfide bridges follow: cysteine 792/cysteine 823 and cysteine 811/cysteine 825. A GPS region spans residues 792-841; sequence CSFWNYSERTMMGYWSTQGCKLVDTNKTRTTCACSHLTNFAILMAHREIA. The helical transmembrane segment at 856–876 threads the bilayer; that stretch reads WVGIVISLVCLAICIFTFCFF. Topologically, residues 877-884 are cytoplasmic; sequence RGLQSDRN. A helical transmembrane segment spans residues 885–905; the sequence is TIHKNLCINLFIAEFIFLIGI. The Extracellular portion of the chain corresponds to 906–911; that stretch reads DKTKYM. A helical membrane pass occupies residues 912–932; it reads IACPIFAGLLHFFFLAAFAWM. Topologically, residues 933 to 955 are cytoplasmic; it reads CLEGVQLYLMLVEVFESEYSRKK. Residues 956–976 traverse the membrane as a helical segment; it reads YYYVAGYLFPATVVGVSAAID. Residues 977–994 lie on the Extracellular side of the membrane; sequence YKSYGTEKACWLHVDNYF. The chain crosses the membrane as a helical span at residues 995–1015; it reads IWSFIGPVTFIILLNIIFLVI. Over 1016–1056 the chain is Cytoplasmic; the sequence is TLCKMVKHSNTLKPDSSRLENINNYRVCDGYYNTDLPGSWV. Residues 1057 to 1077 form a helical membrane-spanning segment; that stretch reads LGAFALLCLLGLTWSFGLLFI. At 1078–1081 the chain is on the extracellular side; that stretch reads NEET. Residues 1082 to 1102 form a helical membrane-spanning segment; the sequence is IVMAYLFTIFNAFQGVFIFIF. At 1103–1478 the chain is on the cytoplasmic side; sequence HCALQKKVRK…EGQMQLVTSL (376 aa). The disordered stretch occupies residues 1378 to 1419; the sequence is AEDHLQSPNRDSLYTSMPNLRDSPYQESSPDMEEDLSPSRRS. A compositionally biased stretch (polar residues) spans 1383-1395; sequence QSPNRDSLYTSMP. Residues serine 1393, serine 1428, and serine 1449 each carry the phosphoserine modification.

The protein belongs to the G-protein coupled receptor 2 family. Adhesion G-protein coupled receptor (ADGR) subfamily. Heterodimer of 2 chains generated by proteolytic processing; the large extracellular N-terminal fragment and the membrane-bound C-terminal fragment predominantly remain associated and non-covalently linked. Post-translationally, autoproteolytically processed at the GPS region of the GAIN-B domain; this cleavage modulates receptor activity. As to expression, ubiquitously expressed.

The protein localises to the postsynaptic cell membrane. With respect to regulation, forms a heterodimer of 2 chains generated by proteolytic processing that remain associated through non-covalent interactions mediated by the GAIN-B domain. In the inactivated receptor, the Stachel sequence (also named stalk) is embedded in the GAIN-B domain, where it adopts a beta-strand conformation. On activation, the Stachel moves into the 7 transmembrane region and adopts a twisted hook-shaped configuration that forms contacts within the receptor, leading to coupling of a G-alpha protein, which activates signaling. The cleaved GAIN-B and N-terminal domains can then dissociate from the rest of the receptor. Orphan adhesion G-protein coupled receptor (aGPCR), which mediates synapse specificity. Ligand binding causes a conformation change that triggers signaling via guanine nucleotide-binding proteins (G proteins) and modulates the activity of downstream effectors. Following G-protein coupled receptor activation, associates with cell adhesion molecules that are expressed at the surface of adjacent cells to direct synapse specificity. Specifically mediates the establishment of perforant-path synapses on CA1-region pyramidal neurons in the hippocampus. Localizes to postsynaptic spines in excitatory synapses in the S.lacunosum-moleculare and interacts with presynaptic cell adhesion molecules, such as teneurins, promoting synapse formation. The polypeptide is Adhesion G protein-coupled receptor L2 (ADGRL2) (Bos taurus (Bovine)).